The sequence spans 435 residues: Secreted RxLR effector protein 35 (435 aa).

The signal sequence occupies residues 1–22 (MRGAYYIIIALCVVASSQVAAG). The RxLR-dEER motif lies at 48–65 (RFLRGSRVVHDDLANEER). Positions 336 to 357 (RPKRTTDGNTGTISLPTKPTKT) are disordered. Over residues 342 to 354 (DGNTGTISLPTKP) the composition is skewed to polar residues.

Belongs to the RxLR effector family.

It is found in the secreted. It localises to the host nucleus. Functionally, secreted effector that acts as an elicitor that induces cell death in host plant cells. The sequence is that of Secreted RxLR effector protein 35 from Plasmopara viticola (Downy mildew of grapevine).